We begin with the raw amino-acid sequence, 474 residues long: Viral protein TPX (474 aa).

Residues 268-474 (VTVTPISSPS…TPTSTTSSNI (207 aa)) are disordered. Residues 275–365 (SPSPTPTPTP…PTPTPTPTPT (91 aa)) show a composition bias toward pro residues. Residues 278-367 (PTPTPTPTPT…PTPTPTPTPT (90 aa)) form a Thr-Pro(N) repeat. The tract at residues 278-467 (PTPTPTPTPT…PTPTPTPTPT (190 aa)) is 3 Thr-Pro repeats regions and two near identical repeats. The segment at residues 368 to 377 (YDITYVVFDV) is a repeat. Residues 378 to 436 (TPSPTPTPTPTPTPTPTPTPTPTPTPTPTPTPTPTPTPTPTPTPTPTPTPTPTPTPTPT) form a Thr-Pro(N) repeat. Over residues 380–434 (SPTPTPTPTPTPTPTPTPTPTPTPTPTPTPTPTPTPTPTPTPTPTPTPTPTPTPT) the composition is skewed to pro residues. The stretch at residues 437 to 446 (YDITYVIFDV) is a repeat. The stretch at 447-467 (TPSPTPTPTPTPTPTPTPTPT) is one Thr-Pro(N) repeat. Residues 449–465 (SPTPTPTPTPTPTPTPT) show a composition bias toward pro residues.

The protein is Viral protein TPX of Thermoproteus tenax virus 1 (strain VT3) (TTV1).